Reading from the N-terminus, the 562-residue chain is NAD-dependent malic enzyme (562 aa).

The Proton donor role is filled by Tyr101. Arg154 is an NAD(+) binding site. Lys172 functions as the Proton acceptor in the catalytic mechanism. A divalent metal cation contacts are provided by Glu243, Asp244, and Asp267. NAD(+)-binding residues include Asp267 and Asn415.

Belongs to the malic enzymes family. Homotetramer. Mg(2+) serves as cofactor. Requires Mn(2+) as cofactor.

It catalyses the reaction (S)-malate + NAD(+) = pyruvate + CO2 + NADH. The catalysed reaction is oxaloacetate + H(+) = pyruvate + CO2. The sequence is that of NAD-dependent malic enzyme from Shewanella piezotolerans (strain WP3 / JCM 13877).